The chain runs to 139 residues: Small integral membrane protein 34 (139 aa).

A helical membrane pass occupies residues 46-66; that stretch reads GTSAAWYILTIIGIYAVIFVF.

It localises to the membrane. This chain is Small integral membrane protein 34, found in Homo sapiens (Human).